A 447-amino-acid polypeptide reads, in one-letter code: Cysteine--tRNA ligase (447 aa).

Cys28 is a Zn(2+) binding site. The 'HIGH' region motif lies at Pro30–Asn40. Cys211, His236, and Glu240 together coordinate Zn(2+). Residues Lys268–Ser272 carry the 'KMSKS' region motif. An ATP-binding site is contributed by Lys271.

It belongs to the class-I aminoacyl-tRNA synthetase family. Monomer. It depends on Zn(2+) as a cofactor.

It is found in the cytoplasm. The enzyme catalyses tRNA(Cys) + L-cysteine + ATP = L-cysteinyl-tRNA(Cys) + AMP + diphosphate. The sequence is that of Cysteine--tRNA ligase from Streptococcus agalactiae serotype III (strain NEM316).